Consider the following 159-residue polypeptide: uncharacterized protein (159 aa).

The N-acetyltransferase domain maps to Met1 to Pro139.

This is an uncharacterized protein from Bacillus subtilis (strain 168).